The following is a 464-amino-acid chain: Protein FAM90A13 (464 aa).

3 disordered regions span residues 1 to 42, 69 to 389, and 411 to 437; these read MMAR…DPRL, VPAT…HDGA, and APSF…SEAP. Basic and acidic residues-rich tracts occupy residues 74–89 and 97–114; these read GKKE…KPRG and NKDK…DPQR. Residues 180–197 show a composition bias toward low complexity; sequence LASLSPLRKASLSSSSSL.

Belongs to the FAM90 family.

This is Protein FAM90A13 from Homo sapiens (Human).